Consider the following 41-residue polypeptide: Virescein (41 aa).

Histidine 41 carries the post-translational modification Histidine amide.

As to quaternary structure, monomer. As to expression, hemolymph.

It is found in the secreted. Has antibacterial activity against Gram-positive and Gram-negative bacteria. This Heliothis virescens (Tobacco budworm moth) protein is Virescein.